Here is a 546-residue protein sequence, read N- to C-terminus: Probable protein kinase UbiB (546 aa).

The region spanning Asp124–Phe502 is the Protein kinase domain. ATP is bound by residues Leu130–Val138 and Lys153. Asp288 (proton acceptor) is an active-site residue. The next 2 helical transmembrane spans lie at Tyr501–Pro521 and Glu522–Trp542.

This sequence belongs to the ABC1 family. UbiB subfamily.

The protein localises to the cell inner membrane. It participates in cofactor biosynthesis; ubiquinone biosynthesis [regulation]. In terms of biological role, is probably a protein kinase regulator of UbiI activity which is involved in aerobic coenzyme Q (ubiquinone) biosynthesis. This is Probable protein kinase UbiB from Escherichia coli O45:K1 (strain S88 / ExPEC).